The chain runs to 422 residues: Tyrosine--tRNA ligase (422 aa).

Residue Tyr35 participates in L-tyrosine binding. A 'HIGH' region motif is present at residues 40–49 (PTADSLHIGH). Residues Tyr170 and Gln174 each contribute to the L-tyrosine site. A 'KMSKS' region motif is present at residues 232–236 (KFGKT). Lys235 contributes to the ATP binding site. The region spanning 355 to 421 (LTLVDLLVES…GKKKYFLVTY (67 aa)) is the S4 RNA-binding domain.

It belongs to the class-I aminoacyl-tRNA synthetase family. TyrS type 1 subfamily. Homodimer.

The protein resides in the cytoplasm. It catalyses the reaction tRNA(Tyr) + L-tyrosine + ATP = L-tyrosyl-tRNA(Tyr) + AMP + diphosphate + H(+). Its function is as follows. Catalyzes the attachment of tyrosine to tRNA(Tyr) in a two-step reaction: tyrosine is first activated by ATP to form Tyr-AMP and then transferred to the acceptor end of tRNA(Tyr). This Bacillus pumilus (strain SAFR-032) protein is Tyrosine--tRNA ligase.